A 162-amino-acid chain; its full sequence is NADH-quinone oxidoreductase subunit I (162 aa).

4Fe-4S ferredoxin-type domains are found at residues L53–E83 and T93–N122. [4Fe-4S] cluster is bound by residues C63, C66, C69, C73, C102, C105, C108, and C112.

Belongs to the complex I 23 kDa subunit family. In terms of assembly, NDH-1 is composed of 14 different subunits. Subunits NuoA, H, J, K, L, M, N constitute the membrane sector of the complex. The cofactor is [4Fe-4S] cluster.

The protein resides in the cell inner membrane. The catalysed reaction is a quinone + NADH + 5 H(+)(in) = a quinol + NAD(+) + 4 H(+)(out). Functionally, NDH-1 shuttles electrons from NADH, via FMN and iron-sulfur (Fe-S) centers, to quinones in the respiratory chain. The immediate electron acceptor for the enzyme in this species is believed to be ubiquinone. Couples the redox reaction to proton translocation (for every two electrons transferred, four hydrogen ions are translocated across the cytoplasmic membrane), and thus conserves the redox energy in a proton gradient. The protein is NADH-quinone oxidoreductase subunit I of Rhodospirillum rubrum (strain ATCC 11170 / ATH 1.1.1 / DSM 467 / LMG 4362 / NCIMB 8255 / S1).